The chain runs to 357 residues: UDP-3-O-acylglucosamine N-acyltransferase (357 aa).

Histidine 251 serves as the catalytic Proton acceptor.

The protein belongs to the transferase hexapeptide repeat family. LpxD subfamily. Homotrimer.

It catalyses the reaction a UDP-3-O-[(3R)-3-hydroxyacyl]-alpha-D-glucosamine + a (3R)-hydroxyacyl-[ACP] = a UDP-2-N,3-O-bis[(3R)-3-hydroxyacyl]-alpha-D-glucosamine + holo-[ACP] + H(+). It participates in bacterial outer membrane biogenesis; LPS lipid A biosynthesis. Catalyzes the N-acylation of UDP-3-O-acylglucosamine using 3-hydroxyacyl-ACP as the acyl donor. Is involved in the biosynthesis of lipid A, a phosphorylated glycolipid that anchors the lipopolysaccharide to the outer membrane of the cell. This Ralstonia pickettii (strain 12J) protein is UDP-3-O-acylglucosamine N-acyltransferase.